A 1230-amino-acid polypeptide reads, in one-letter code: Cullin-associated NEDD8-dissociated protein 1 (1230 aa).

The residue at position 2 (Ala-2) is an N-acetylalanine. HEAT repeat units lie at residues 2–39 (ASASYHISNLLEKMTSSDKDFRFMATNDLMTELQKDSI), 44–81 (DSERKVVKMILRLLEDKNGEVQNLAVKCLGPLVSKVKE), 83–119 (QVETIVDTLCTNMLSDKEQLRDISSIGLKTVIGELPP), 131–165 (CKKITGRLTSAIAKQEDVSVQLEALDIMADMLSRQ), 171–208 (NFHPSILTCLLPQLTSPRLAVRKRTIIALGHLVMSCGN), 210–247 (VFVDLIEHLLSELSKNDSMSTTRTYIQCIAAISRQAGH), 248–282 (RIGEYLEKIIPLVVKFCNVDDDELREYCIQAFESF), 289–366 (EVYP…TRHE), 370–407 (EFYKTVSPALIARFKEREENVKADVFHAYLSLLKQTRP), 424–467 (PLTM…VLPG), 471–510 (QHIPVLVPGIIFSLNDKSSSSNLKIDALSCLYVILCNHSP), and 515–552 (PHVQALVPPVVACVGDPFYKITSEALLVTQQLVKVIRP). Residues 315-344 (DEDEDENAMDADGGDDDDQGSDDEYSDDDD) form a disordered region. Phosphoserine is present on Ser-335. Ser-558 is modified (phosphoserine). HEAT repeat units lie at residues 563-602 (PYIKDLFTCTIKRLKAADIDQEVKERAISCMGQIICNLGD), 606-643 (PDLSNTLQIFLERLKNEITRLTTVKALTLIAGSPLKID), 646-683 (PVLGEGVPILASFLRKNQRALKLGTLSALDILIKNYSD), 688-725 (AMIDAVLDELPPLISESDMHVSQMAISFLTTLAKVYPS), 729-768 (KISGSILNELIGLVRSPLLQGGALSAMLDFFQALVVTGTN), 770-808 (LGYMDLLRMLTGPVYSQSTALTHKQSYYSIAKCVAALTR), 809-845 (ACPKEGPAVVGQFIQDVKNSRSTDSIRLLALLSLGEV), 852-889 (SGQLELKSVILEAFSSPSEEVKSAASYALGSISVGNLP), 890-927 (EYLPFVLQEITSQPKRQYLLLHSLKEIISSASVAGLKP), 928-960 (YVENIWALLLKHCECAEEGTRNVVAECLGKLTL), 961-998 (IDPETLLPRLKGYLISGSSYARSSVVTAVKFTISDHPQ), 1002-1039 (PLLKNCIGDFLKTLEDPDLNVRRVALVTFNSAAHNKPS), 1043-1097 (DLLD…DSCL), 1099-1133 (RLDIFEFLNHVEDGLKDHYDIKMLTFLMLVRLSTL), and 1140-1189 (QRLD…IPEA). Lys-971 bears the N6-acetyllysine mark.

The protein belongs to the CAND family. In terms of assembly, interacts with TBP. Part of a complex that contains CUL1 and RBX1. Interacts with unneddylated cullins: interacts with CUL1, CUL2, CUL3, CUL4A, CUL4B and CUL5. Does not bind neddylated CUL1. Interaction with cullins is abolished in presence of COMMD1, which antagonizes with CAND1 for interacting with cullins. Interacts with ERCC6. Interacts with DCUN1D1, DCUN1D2, DCUN1D3, DCUN1D4 and DCUN1D5; these interactions are bridged by cullins and strongly inhibits the neddylation of cullins.

It localises to the cytoplasm. The protein resides in the nucleus. Functionally, key assembly factor of SCF (SKP1-CUL1-F-box protein) E3 ubiquitin ligase complexes that promotes the exchange of the substrate-recognition F-box subunit in SCF complexes, thereby playing a key role in the cellular repertoire of SCF complexes. Acts as a F-box protein exchange factor. The exchange activity of CAND1 is coupled with cycles of neddylation conjugation: in the deneddylated state, cullin-binding CAND1 binds CUL1-RBX1, increasing dissociation of the SCF complex and promoting exchange of the F-box protein. Probably plays a similar role in other cullin-RING E3 ubiquitin ligase complexes. The chain is Cullin-associated NEDD8-dissociated protein 1 (Cand1) from Mus musculus (Mouse).